Here is a 201-residue protein sequence, read N- to C-terminus: Rho GDP-dissociation inhibitor 2 (201 aa).

The segment at methionine 1 to methionine 38 is disordered. Threonine 2 bears the N-acetylthreonine mark. At lysine 21 the chain carries N6-acetyllysine. A Phosphotyrosine modification is found at tyrosine 24. 5 positions are modified to N6-acetyllysine: lysine 25, lysine 40, lysine 47, lysine 102, and lysine 124. Phosphoserine is present on serine 145. The residue at position 175 (lysine 175) is an N6-acetyllysine.

This sequence belongs to the Rho GDI family. In terms of assembly, interacts with RHOA. Interacts with RAC1. Interacts with RAC2. Interacts with CDC42. As to expression, detected in bone marrow, thymus and spleen.

Its subcellular location is the cytoplasm. The protein localises to the cytosol. In terms of biological role, regulates the GDP/GTP exchange reaction of the Rho proteins by inhibiting the dissociation of GDP from them, and the subsequent binding of GTP to them. Regulates reorganization of the actin cytoskeleton mediated by Rho family members. This is Rho GDP-dissociation inhibitor 2 (ARHGDIB) from Homo sapiens (Human).